The primary structure comprises 532 residues: Light-independent protochlorophyllide reductase subunit B (532 aa).

[4Fe-4S] cluster is bound at residue Asp-36. The active-site Proton donor is Asp-292. 428 to 429 (GL) is a binding site for substrate. The tract at residues 445–486 (EEEEPESISNGHAAAAGSEGGVPDSGEAGDAGDTDGMPWSPD) is disordered.

It belongs to the ChlB/BchB/BchZ family. Protochlorophyllide reductase is composed of three subunits; BchL, BchN and BchB. Forms a heterotetramer of two BchB and two BchN subunits. The cofactor is [4Fe-4S] cluster.

The catalysed reaction is chlorophyllide a + oxidized 2[4Fe-4S]-[ferredoxin] + 2 ADP + 2 phosphate = protochlorophyllide a + reduced 2[4Fe-4S]-[ferredoxin] + 2 ATP + 2 H2O. It functions in the pathway porphyrin-containing compound metabolism; bacteriochlorophyll biosynthesis (light-independent). Functionally, component of the dark-operative protochlorophyllide reductase (DPOR) that uses Mg-ATP and reduced ferredoxin to reduce ring D of protochlorophyllide (Pchlide) to form chlorophyllide a (Chlide). This reaction is light-independent. The NB-protein (BchN-BchB) is the catalytic component of the complex. This Chlorobium phaeobacteroides (strain BS1) protein is Light-independent protochlorophyllide reductase subunit B.